We begin with the raw amino-acid sequence, 833 residues long: Leucine--tRNA ligase (833 aa).

Residues 41–52 (PYPSGAGLHVGH) carry the 'HIGH' region motif. The short motif at 610-614 (KMSKS) is the 'KMSKS' region element. Residue Lys613 coordinates ATP.

Belongs to the class-I aminoacyl-tRNA synthetase family.

The protein resides in the cytoplasm. It catalyses the reaction tRNA(Leu) + L-leucine + ATP = L-leucyl-tRNA(Leu) + AMP + diphosphate. The polypeptide is Leucine--tRNA ligase (Streptococcus equi subsp. zooepidemicus (strain MGCS10565)).